The chain runs to 730 residues: MWVTRLLPVLLLQHVLLHLLLLPIAIPYAEGQKKRRNTLHEFKRSAKTTLIKEDPLLKIKTKKMNTADQCANRCIRNKGLPFTCKAFVFDKARKRCLWFPFNSMSSGVKKEFGHEFDLYENKDYIRNCIIGKGGSYKGTVSITKSGIKCQPWNSMIPHEHSFLPSSYRGKDLQENYCRNPRGEEGGPWCFTSNPEVRYEVCDIPQCSEVECMTCNGESYRGPMDHTETGKICQRWDHQTPHRHKFLPERYPDKGFDDNYCRNPDGKPRPWCYTLDPDTPWEYCAIKMCAHSTMNDTDLPMQTTECIQGQGEGYRGTINTIWNGIPCQRWDSQYPHQHDITPENFKCKDLRENYCRNPDGAESPWCFTTDPNIRVGYCSQIPKCDVSSGQDCYRGNGKNYMGSLSKTRSGLTCSMWDKNMEDLHRHIFWEPDATKLNKNYCRNPDDDAHGPWCYTGNPLIPWDYCPISRCEGDTTPTIVNLDHPVISCAKTKQLRVVNGIPTRTNVGWMVSLKYRNKHICGGSLIKESWILTARQCFPSRNKDLKDYEAWLGIHDVHGRGDEKRKQVLNVTQLVYGPEGSDLVLLKLARPAILDDFVSTIDLPNYGCTIPEKTTCSVYGWGYTGLINSDGLLRVAHLYIMGNEKCSQYHQGKVTLNESEICAGAENIVSGPCEGDYGGPLVCEQHKMRMVLGVIVPGRGCAIPNRPGIFVRVAYYAKWIHKIILTYKAPQL.

A signal peptide spans 1-31 (MWVTRLLPVLLLQHVLLHLLLLPIAIPYAEG). Glutamine 32 bears the Pyrrolidone carboxylic acid mark. The region spanning 37 to 123 (NTLHEFKRSA…HEFDLYENKD (87 aa)) is the PAN domain. 8 cysteine pairs are disulfide-bonded: cysteine 70-cysteine 96, cysteine 74-cysteine 84, cysteine 128-cysteine 206, cysteine 149-cysteine 189, cysteine 177-cysteine 201, cysteine 211-cysteine 288, cysteine 232-cysteine 271, and cysteine 260-cysteine 283. 2 Kringle domains span residues 128–206 (CIIG…IPQC) and 211–288 (CMTC…IKMC). Asparagine 294 carries N-linked (GlcNAc...) asparagine glycosylation. 11 disulfides stabilise this stretch: cysteine 305/cysteine 383, cysteine 326/cysteine 365, cysteine 354/cysteine 377, cysteine 391/cysteine 469, cysteine 412/cysteine 452, cysteine 440/cysteine 464, cysteine 487/cysteine 606, cysteine 519/cysteine 535, cysteine 614/cysteine 681, cysteine 644/cysteine 660, and cysteine 671/cysteine 699. Kringle domains follow at residues 305–383 (CIQG…IPKC) and 391–469 (CYRG…ISRC). The 229-residue stretch at 495–723 (VVNGIPTRTN…YAKWIHKIIL (229 aa)) folds into the Peptidase S1 domain. Asparagine 568 and asparagine 655 each carry an N-linked (GlcNAc...) asparagine glycan.

Belongs to the peptidase S1 family. Plasminogen subfamily. In terms of assembly, dimer of an alpha chain and a beta chain linked by a disulfide bond. Interacts with SRPX2; the interaction increases HGF mitogenic activity. Post-translationally, the single-chain precursor undergoes proteolytic processing by TMPRSS13 resulting in an active two-chain form. The single-chain precursor undergoes proteolytic processing by HGFAC resulting in an active two-chain form.

In terms of biological role, potent mitogen for mature parenchymal hepatocyte cells, seems to be a hepatotrophic factor, and acts as a growth factor for a broad spectrum of tissues and cell types. Activating ligand for the receptor tyrosine kinase MET by binding to it and promoting its dimerization. Activates MAPK signaling following TMPRSS13 cleavage and activation. The protein is Hepatocyte growth factor (HGF) of Bos taurus (Bovine).